A 758-amino-acid polypeptide reads, in one-letter code: MTSGPFFFCVFIIGRYFTLGNAQDVSCPLGSFPCGNISKCLPQLLHCNGVDDCGNQADEDNCGDNNGWSLQLDKYFANYYKLTSTNSIEAETSECLVGSVPMHCLCRDLELDCDEANLRAVPSVSSNVTVMSLQWNFIRTLPPNSFRKYHDLQKLCLQNNKIRSVSVSAFRGLHSLTKLYLSHNRITFLKPGVFEDLHRLEWLIIEDNHLSRISPLTFYGLNSLILLVLMNNALTRLPDKPLCQHMPRLHWLDFEGNRIHNLRNLTFISCNNLTVLVMRKNKINHLNEHAFTHLQKLDELDLGSNKIENLPPNIFKDLKELSQLNISYNPIQKIEVNQFDYLAKLKSLSLEGIEISNIQQRMFRPLINLSHIYFKKFQYCGYAPHVRSCKPNTDGISSLENLLASIIQRVFVWVVSAITCFGNIFVICMRPYIRSENKLHAMSIMSLCCADCLMGVYLFVIGAFDLKFRGEYRKHAQPWMESVHCQFMGSLAVLSTEVSVLLLTFLTLEKYICIVYPFRCLRPRKCRTVAVLIFIWITGFIVAFAPLGNKEFFKNYYGTNGVCFPLHSEDTGSTGAQIYSVVIFLGINLVAFIIIVFSYGSMFYSVHQSTITATEIQKQVKKEMILAKRFFFIVFTDALCWIPIFILKFLSLIRVEIPDTITSWVVIFILPINSALNPIIYTLTTRPFKEMIHQLWYNYRQRRSVDRKGTQKAYTPSFIWVEMWPLQEMSTEFMKPDAFTDPCDLSLVSRSSRLNSYS.

The Extracellular portion of the chain corresponds to 1-408 (MTSGPFFFCV…LENLLASIIQ (408 aa)). The 38-residue stretch at 26–63 (SCPLGSFPCGNISKCLPQLLHCNGVDDCGNQADEDNCG) folds into the LDL-receptor class A domain. Disulfide bonds link cysteine 27–cysteine 40, cysteine 34–cysteine 53, and cysteine 47–cysteine 62. A glycan (N-linked (GlcNAc...) asparagine) is linked at asparagine 36. Residues leucine 45, asparagine 48, valine 50, aspartate 52, aspartate 58, and glutamate 59 each contribute to the Ca(2+) site. 11 LRR repeats span residues 105-125 (LCRD…PSVS), 126-148 (SNVT…SFRK), 149-172 (YHDL…AFRG), 173-196 (LHSL…VFED), 198-220 (HRLE…TFYG), 221-244 (LNSL…PLCQ), 246-269 (MPRL…TFIS), 270-293 (CNNL…AFTH), 294-317 (LQKL…IFKD), 319-341 (KELS…QFDY), and 342-365 (LAKL…MFRP). Asparagine 127 is a glycosylation site (N-linked (GlcNAc...) asparagine). N-linked (GlcNAc...) asparagine glycans are attached at residues asparagine 264 and asparagine 272. An N-linked (GlcNAc...) asparagine glycan is attached at asparagine 325. The N-linked (GlcNAc...) asparagine glycan is linked to asparagine 368. The chain crosses the membrane as a helical span at residues 409 to 429 (RVFVWVVSAITCFGNIFVICM). Residues 430-443 (RPYIRSENKLHAMS) lie on the Cytoplasmic side of the membrane. A helical membrane pass occupies residues 444–464 (IMSLCCADCLMGVYLFVIGAF). The Extracellular portion of the chain corresponds to 465–486 (DLKFRGEYRKHAQPWMESVHCQ). Cysteines 485 and 563 form a disulfide. A helical transmembrane segment spans residues 487–507 (FMGSLAVLSTEVSVLLLTFLT). Residues 508–527 (LEKYICIVYPFRCLRPRKCR) are Cytoplasmic-facing. The chain crosses the membrane as a helical span at residues 528 to 548 (TVAVLIFIWITGFIVAFAPLG). Residues 549–577 (NKEFFKNYYGTNGVCFPLHSEDTGSTGAQ) lie on the Extracellular side of the membrane. Residues 578–598 (IYSVVIFLGINLVAFIIIVFS) form a helical membrane-spanning segment. Over 599 to 629 (YGSMFYSVHQSTITATEIQKQVKKEMILAKR) the chain is Cytoplasmic. A helical transmembrane segment spans residues 630 to 650 (FFFIVFTDALCWIPIFILKFL). The Extracellular segment spans residues 651 to 660 (SLIRVEIPDT). The helical transmembrane segment at 661 to 681 (ITSWVVIFILPINSALNPIIY) threads the bilayer. Topologically, residues 682–758 (TLTTRPFKEM…SRSSRLNSYS (77 aa)) are cytoplasmic.

It belongs to the G-protein coupled receptor 1 family. In terms of assembly, interacts with C1QTNF8. Detected in brain cortex, and at low levels in testis.

It localises to the cell membrane. Functionally, receptor for relaxins. The activity of this receptor is mediated by G proteins leading to stimulation of adenylate cyclase and an increase of cAMP. Binding of the ligand may also activate a tyrosine kinase pathway that inhibits the activity of a phosphodiesterase that degrades cAMP. This is Relaxin receptor 1 (Rxfp1) from Rattus norvegicus (Rat).